The following is a 150-amino-acid chain: U1 small nuclear ribonucleoprotein C (150 aa).

A Matrin-type zinc finger spans residues 4–36 (YYCDYCKSYLTHDTMSVRKSHLQGRNHIKFYCD). Positions 66–127 (SDAKKSNGSS…PPNLSGLPLP (62 aa)) are disordered. The span at 80–92 (DIDKKENSSDHNK) shows a compositional bias: basic and acidic residues. Over residues 103-112 (NDNDDDDDEM) the composition is skewed to acidic residues.

The protein belongs to the U1 small nuclear ribonucleoprotein C family. As to quaternary structure, U1 snRNP is composed of the 7 core Sm proteins B/B', D1, D2, D3, E, F and G that assemble in a heptameric protein ring on the Sm site of the small nuclear RNA to form the core snRNP, and at least 3 U1 snRNP-specific proteins U1-70K, U1-A and U1-C. U1-C interacts with U1 snRNA and the 5' splice-site region of the pre-mRNA.

The protein resides in the nucleus. Component of the spliceosomal U1 snRNP, which is essential for recognition of the pre-mRNA 5' splice-site and the subsequent assembly of the spliceosome. U1-C is directly involved in initial 5' splice-site recognition for both constitutive and regulated alternative splicing. The interaction with the 5' splice-site seems to precede base-pairing between the pre-mRNA and the U1 snRNA. Stimulates commitment or early (E) complex formation by stabilizing the base pairing of the 5' end of the U1 snRNA and the 5' splice-site region. In Candida albicans (strain WO-1) (Yeast), this protein is U1 small nuclear ribonucleoprotein C.